The following is a 178-amino-acid chain: Gamma-crystallin S (178 aa).

An N-acetylserine modification is found at Ser-2. An N-terminal arm region spans residues 2-5 (SKSV). Beta/gamma crystallin 'Greek key' domains follow at residues 6 to 44 (AKITFYDDKNFQGHHYECDSDCPDFHTYLSCCNSIRVTG) and 45 to 87 (GAWV…KVIH). Residues 88–93 (LSSGGQ) are connecting peptide. 2 Beta/gamma crystallin 'Greek key' domains span residues 94–134 (YKLQ…KVLD) and 135–177 (GVWV…RRIM).

Belongs to the beta/gamma-crystallin family. As to quaternary structure, monomer.

Crystallins are the dominant structural components of the vertebrate eye lens. The polypeptide is Gamma-crystallin S (CRYGS) (Macropus fuliginosus (Western gray kangaroo)).